Reading from the N-terminus, the 141-residue chain is Nucleoside diphosphate kinase (141 aa).

ATP is bound by residues lysine 11, phenylalanine 59, arginine 87, threonine 93, arginine 104, and asparagine 114. Residue histidine 117 is the Pros-phosphohistidine intermediate of the active site.

This sequence belongs to the NDK family. Homotetramer. Requires Mg(2+) as cofactor.

Its subcellular location is the cytoplasm. The catalysed reaction is a 2'-deoxyribonucleoside 5'-diphosphate + ATP = a 2'-deoxyribonucleoside 5'-triphosphate + ADP. It catalyses the reaction a ribonucleoside 5'-diphosphate + ATP = a ribonucleoside 5'-triphosphate + ADP. Functionally, major role in the synthesis of nucleoside triphosphates other than ATP. The ATP gamma phosphate is transferred to the NDP beta phosphate via a ping-pong mechanism, using a phosphorylated active-site intermediate. The protein is Nucleoside diphosphate kinase of Bordetella bronchiseptica (strain ATCC BAA-588 / NCTC 13252 / RB50) (Alcaligenes bronchisepticus).